The sequence spans 104 residues: Urease subunit beta (104 aa).

It belongs to the urease beta subunit family. Heterotrimer of UreA (gamma), UreB (beta) and UreC (alpha) subunits. Three heterotrimers associate to form the active enzyme.

The protein resides in the cytoplasm. The catalysed reaction is urea + 2 H2O + H(+) = hydrogencarbonate + 2 NH4(+). Its pathway is nitrogen metabolism; urea degradation; CO(2) and NH(3) from urea (urease route): step 1/1. This is Urease subunit beta from Rhodopseudomonas palustris (strain BisB18).